Here is a 433-residue protein sequence, read N- to C-terminus: Histidinol dehydrogenase (433 aa).

Positions 129, 191, and 214 each coordinate NAD(+). The substrate site is built by Ser-237, Gln-259, and His-262. Zn(2+) is bound by residues Gln-259 and His-262. Residues Glu-326 and His-327 each act as proton acceptor in the active site. Substrate contacts are provided by His-327, Asp-360, Glu-414, and His-419. Asp-360 serves as a coordination point for Zn(2+). Residue His-419 participates in Zn(2+) binding.

This sequence belongs to the histidinol dehydrogenase family. It depends on Zn(2+) as a cofactor.

The enzyme catalyses L-histidinol + 2 NAD(+) + H2O = L-histidine + 2 NADH + 3 H(+). The protein operates within amino-acid biosynthesis; L-histidine biosynthesis; L-histidine from 5-phospho-alpha-D-ribose 1-diphosphate: step 9/9. Its function is as follows. Catalyzes the sequential NAD-dependent oxidations of L-histidinol to L-histidinaldehyde and then to L-histidine. The protein is Histidinol dehydrogenase of Methanosarcina barkeri (strain Fusaro / DSM 804).